We begin with the raw amino-acid sequence, 186 residues long: Phosphoprotein p30 (186 aa).

The protein belongs to the asfivirus phosphoprotein p30 family. In terms of assembly, oligomer. Interacts with host HNRNPK. In terms of processing, phosphorylated on serine residues in the 115 N-terminal amino acids.

It is found in the host cytoplasm. It localises to the host nucleus. The protein resides in the virion. In terms of biological role, modifies the subcellular distribution of heterogeneous nuclear ribonucleoprotein K (HNRNPK) and may contribute to modulate HNRNPK functions related to processing and export of mRNAs during ASFV infection. Necessary for virus internalization. In African swine fever virus (isolate Tick/South Africa/Pretoriuskop Pr4/1996) (ASFV), this protein is Phosphoprotein p30.